A 332-amino-acid chain; its full sequence is Protein pelota homolog (332 aa).

It belongs to the eukaryotic release factor 1 family. Pelota subfamily. In terms of assembly, monomer. A divalent metal cation is required as a cofactor.

The protein resides in the cytoplasm. Functionally, may function in recognizing stalled ribosomes, interact with stem-loop structures in stalled mRNA molecules, and effect endonucleolytic cleavage of the mRNA. May play a role in the release non-functional ribosomes and degradation of damaged mRNAs. Has endoribonuclease activity. The protein is Protein pelota homolog of Pyrobaculum calidifontis (strain DSM 21063 / JCM 11548 / VA1).